Here is a 434-residue protein sequence, read N- to C-terminus: Glutamate-1-semialdehyde 2,1-aminomutase 2 (434 aa).

Lys-270 is modified (N6-(pyridoxal phosphate)lysine).

This sequence belongs to the class-III pyridoxal-phosphate-dependent aminotransferase family. HemL subfamily. As to quaternary structure, homodimer. Pyridoxal 5'-phosphate serves as cofactor.

It localises to the cytoplasm. It carries out the reaction (S)-4-amino-5-oxopentanoate = 5-aminolevulinate. It participates in porphyrin-containing compound metabolism; protoporphyrin-IX biosynthesis; 5-aminolevulinate from L-glutamyl-tRNA(Glu): step 2/2. This is Glutamate-1-semialdehyde 2,1-aminomutase 2 from Bacillus cereus (strain G9842).